We begin with the raw amino-acid sequence, 122 residues long: Large ribosomal subunit protein bL12 (122 aa).

The protein belongs to the bacterial ribosomal protein bL12 family. As to quaternary structure, homodimer. Part of the ribosomal stalk of the 50S ribosomal subunit. Forms a multimeric L10(L12)X complex, where L10 forms an elongated spine to which 2 to 4 L12 dimers bind in a sequential fashion. Binds GTP-bound translation factors.

Functionally, forms part of the ribosomal stalk which helps the ribosome interact with GTP-bound translation factors. Is thus essential for accurate translation. The chain is Large ribosomal subunit protein bL12 from Clostridium botulinum (strain 657 / Type Ba4).